We begin with the raw amino-acid sequence, 345 residues long: Growth hormone-inducible transmembrane protein (345 aa).

A mitochondrion-targeting transit peptide spans 1-45; sequence MLAARLVCLRTLPSRVFHPAFTKASPVVKNSITKNQWLLTPSREY. The Mitochondrial matrix portion of the chain corresponds to 46 to 82; the sequence is ATKTRIGIRRGRTGQELKEAALEPSMEKIFKIDQMGR. The helical transmembrane segment at 83-103 threads the bilayer; that stretch reads WFVAGGAAVGLGALCYYGLGL. Topologically, residues 104–125 are mitochondrial intermembrane; that stretch reads SNEIGAIEKAVIWPQYVKDRIH. A helical transmembrane segment spans residues 126 to 146; it reads STYMYLAGSIGLTALSAIAIS. Residues 147-159 are Mitochondrial matrix-facing; sequence RTPVLMNFMMRGS. The helical transmembrane segment at 160-180 threads the bilayer; it reads WVTIGVTFAAMVGAGMLVRSI. Residues 181–190 are Mitochondrial intermembrane-facing; the sequence is PYDQSPGPKH. Residues 191 to 211 traverse the membrane as a helical segment; sequence LAWLLHSGVMGAVVAPLTILG. The Mitochondrial matrix segment spans residues 212 to 213; the sequence is GP. A helical membrane pass occupies residues 214-234; the sequence is LLIRAAWYTAGIVGGLSTVAM. Topologically, residues 235–244 are mitochondrial intermembrane; it reads CAPSEKFLNM. A helical membrane pass occupies residues 245 to 265; that stretch reads GAPLGVGLGLVFVSSLGSMFL. Residues 266–271 are Mitochondrial matrix-facing; it reads PPTTVA. The chain crosses the membrane as a helical span at residues 272 to 292; sequence GATLYSVAMYGGLVLFSMFLL. Over 293–345 the chain is Mitochondrial intermembrane; sequence YDTQKVIKRAEVSPMYGVQKYDPINSMLSIYMDTLNIFMRVATMLATGGNRKK.

Belongs to the BI1 family. As to quaternary structure, interacts with LETM1. Interacts with AFG3L2. In terms of processing, undergoes AFG3L2-mediated proteolytic degradation, upon hyperpolarization of mitochondria.

The protein resides in the mitochondrion inner membrane. It catalyses the reaction Ca(2+)(in) + 2 H(+)(out) = Ca(2+)(out) + 2 H(+)(in). The enzyme catalyses K(+)(in) + H(+)(out) = K(+)(out) + H(+)(in). Its function is as follows. Plays an important role in maintenance of mitochondrial morphology and in mediating either calcium or potassium/proton antiport. Mediates proton-dependent calcium efflux from mitochondrion. Also functions as an electroneutral mitochondrial proton/potassium exchanger. Required for the mitochondrial tubular network and cristae organization. Involved in apoptotic release of cytochrome c. Inhibits the proteolytic activity of AFG3L2, stimulating respiration and stabilizing respiratory enzymes in actively respiring mitochondria. However, when mitochondria become hyperpolarized, GHITM loses its inhibitory activity toward AFG3L2 and the now the active AFG3L2 turns first on GHITM and, if hyperpolarization persists, on other proteins of the mitochondria, leading to a broad remodeling of the mitochondrial proteome. The chain is Growth hormone-inducible transmembrane protein (GHITM) from Homo sapiens (Human).